A 324-amino-acid polypeptide reads, in one-letter code: Olfactory receptor 8U3 (324 aa).

Topologically, residues 1–25 (MAEVNIIYVTVFILKGITNRPELQA) are extracellular. Residues 26–46 (PCFGVFLVIYLVTVLGNLGLI) form a helical membrane-spanning segment. At 47–54 (TLIKIDTR) the chain is on the cytoplasmic side. A helical membrane pass occupies residues 55–75 (LHTPMYYFLSHLAFVDLCYSS). Residues 76–99 (AITPKMMVNFVVERNTIPFHACAT) are Extracellular-facing. Cys97 and Cys189 are joined by a disulfide. A helical transmembrane segment spans residues 100–120 (QLGCFLTFMITECFLLASMAY). Topologically, residues 121 to 139 (DCYVAICSPLHYSTLMSRR) are cytoplasmic. A helical membrane pass occupies residues 140 to 160 (VCIQLVAVPYIYSFLVALFHT). Residues 161–196 (VITFRLTYCGPNLINHFYCDDLPFLALSCSDTHMKE) lie on the Extracellular side of the membrane. Residues 197-217 (ILIFAFAGFDMISSSSIVLTS) traverse the membrane as a helical segment. At 218–237 (YIFIIAAILRIRSTQGQHKA) the chain is on the cytoplasmic side. Residues 238 to 258 (ISTCGSHMVTVTIFYGTLIFM) form a helical membrane-spanning segment. At 259–271 (YLQPKSNHSLDTD) the chain is on the extracellular side. The N-linked (GlcNAc...) asparagine glycan is linked to Asn265. Residues 272-292 (KMASVFYTVVIPMLNPLIYSL) form a helical membrane-spanning segment. Residues 293 to 324 (RNKEVKDASKKALDKGCENLQILTFLKIRKLY) lie on the Cytoplasmic side of the membrane.

Belongs to the G-protein coupled receptor 1 family.

Its subcellular location is the cell membrane. Its function is as follows. Odorant receptor. In Homo sapiens (Human), this protein is Olfactory receptor 8U3.